The primary structure comprises 209 residues: Imidazole glycerol phosphate synthase subunit HisH (209 aa).

One can recognise a Glutamine amidotransferase type-1 domain in the interval 1–205 (MIAIIDYGMG…KGVVETWKSS (205 aa)). Cysteine 79 (nucleophile) is an active-site residue. Residues histidine 180 and glutamate 182 contribute to the active site.

Heterodimer of HisH and HisF.

Its subcellular location is the cytoplasm. The enzyme catalyses 5-[(5-phospho-1-deoxy-D-ribulos-1-ylimino)methylamino]-1-(5-phospho-beta-D-ribosyl)imidazole-4-carboxamide + L-glutamine = D-erythro-1-(imidazol-4-yl)glycerol 3-phosphate + 5-amino-1-(5-phospho-beta-D-ribosyl)imidazole-4-carboxamide + L-glutamate + H(+). It catalyses the reaction L-glutamine + H2O = L-glutamate + NH4(+). Its pathway is amino-acid biosynthesis; L-histidine biosynthesis; L-histidine from 5-phospho-alpha-D-ribose 1-diphosphate: step 5/9. In terms of biological role, IGPS catalyzes the conversion of PRFAR and glutamine to IGP, AICAR and glutamate. The HisH subunit catalyzes the hydrolysis of glutamine to glutamate and ammonia as part of the synthesis of IGP and AICAR. The resulting ammonia molecule is channeled to the active site of HisF. In Bacillus thuringiensis (strain Al Hakam), this protein is Imidazole glycerol phosphate synthase subunit HisH.